Reading from the N-terminus, the 172-residue chain is 3-hydroxydecanoyl-[acyl-carrier-protein] dehydratase (172 aa).

His71 is a catalytic residue.

Belongs to the thioester dehydratase family. FabA subfamily. In terms of assembly, homodimer.

The protein localises to the cytoplasm. It carries out the reaction a (3R)-hydroxyacyl-[ACP] = a (2E)-enoyl-[ACP] + H2O. The catalysed reaction is (3R)-hydroxydecanoyl-[ACP] = (2E)-decenoyl-[ACP] + H2O. It catalyses the reaction (2E)-decenoyl-[ACP] = (3Z)-decenoyl-[ACP]. The protein operates within lipid metabolism; fatty acid biosynthesis. Its function is as follows. Necessary for the introduction of cis unsaturation into fatty acids. Catalyzes the dehydration of (3R)-3-hydroxydecanoyl-ACP to E-(2)-decenoyl-ACP and then its isomerization to Z-(3)-decenoyl-ACP. Can catalyze the dehydratase reaction for beta-hydroxyacyl-ACPs with saturated chain lengths up to 16:0, being most active on intermediate chain length. The polypeptide is 3-hydroxydecanoyl-[acyl-carrier-protein] dehydratase (Serratia proteamaculans (strain 568)).